The following is a 230-amino-acid chain: Large ribosomal subunit protein uL1 (230 aa).

It belongs to the universal ribosomal protein uL1 family. In terms of assembly, part of the 50S ribosomal subunit.

Functionally, binds directly to 23S rRNA. The L1 stalk is quite mobile in the ribosome, and is involved in E site tRNA release. In terms of biological role, protein L1 is also a translational repressor protein, it controls the translation of the L11 operon by binding to its mRNA. This Bifidobacterium longum subsp. infantis (strain ATCC 15697 / DSM 20088 / JCM 1222 / NCTC 11817 / S12) protein is Large ribosomal subunit protein uL1.